Consider the following 1238-residue polypeptide: DNA-directed RNA polymerase subunit beta (1238 aa).

The segment at 1187–1238 (EGREDTPPEEVYEESYEEGFEEEIEELPEDIDFEPDSFDIENDDLDLEDFDI) is disordered. The span at 1193-1238 (PPEEVYEESYEEGFEEEIEELPEDIDFEPDSFDIENDDLDLEDFDI) shows a compositional bias: acidic residues.

It belongs to the RNA polymerase beta chain family. In terms of assembly, the RNAP catalytic core consists of 2 alpha, 1 beta, 1 beta' and 1 omega subunit. When a sigma factor is associated with the core the holoenzyme is formed, which can initiate transcription.

It carries out the reaction RNA(n) + a ribonucleoside 5'-triphosphate = RNA(n+1) + diphosphate. DNA-dependent RNA polymerase catalyzes the transcription of DNA into RNA using the four ribonucleoside triphosphates as substrates. This is DNA-directed RNA polymerase subunit beta from Thermoanaerobacter pseudethanolicus (strain ATCC 33223 / 39E) (Clostridium thermohydrosulfuricum).